The primary structure comprises 100 residues: Large ribosomal subunit protein uL23 (100 aa).

This sequence belongs to the universal ribosomal protein uL23 family. As to quaternary structure, part of the 50S ribosomal subunit. Contacts protein L29, and trigger factor when it is bound to the ribosome.

One of the early assembly proteins it binds 23S rRNA. One of the proteins that surrounds the polypeptide exit tunnel on the outside of the ribosome. Forms the main docking site for trigger factor binding to the ribosome. This chain is Large ribosomal subunit protein uL23, found in Yersinia enterocolitica serotype O:8 / biotype 1B (strain NCTC 13174 / 8081).